Reading from the N-terminus, the 617-residue chain is V-type proton ATPase catalytic subunit A (617 aa).

Residue 257-264 participates in ATP binding; it reads GAFGCGKT.

It belongs to the ATPase alpha/beta chains family. As to quaternary structure, V-ATPase is a heteromultimeric enzyme composed of a peripheral catalytic V1 complex (components A to H) attached to an integral membrane V0 proton pore complex (components: a, c, c', c'', d, e, f and VOA1).

Its subcellular location is the vacuole membrane. The catalysed reaction is ATP + H2O + 4 H(+)(in) = ADP + phosphate + 5 H(+)(out). In terms of biological role, catalytic subunit of the V1 complex of vacuolar(H+)-ATPase (V-ATPase), a multisubunit enzyme composed of a peripheral complex (V1) that hydrolyzes ATP and a membrane integral complex (V0) that translocates protons. V-ATPase is responsible for acidifying and maintaining the pH of intracellular compartments. This chain is V-type proton ATPase catalytic subunit A (VMA1), found in Eremothecium gossypii (strain ATCC 10895 / CBS 109.51 / FGSC 9923 / NRRL Y-1056) (Yeast).